The primary structure comprises 411 residues: Heterogeneous nuclear ribonucleoprotein 1 (411 aa).

The 77-residue stretch at 6–82 (GKLFVGGISW…REVDVKRAMS (77 aa)) folds into the RRM 1 domain. Disordered stretches follow at residues 81-103 (MSRE…SSGG), 183-221 (KRAL…DGRM), and 358-411 (AAYG…RQGQ). A compositionally biased stretch (polar residues) spans 87 to 101 (QVSGRTGNLNTSRSS). Positions 110–187 (KKIFVGGLPP…KQVEVKRALP (78 aa)) constitute an RRM 2 domain. 3 stretches are compositionally biased toward gly residues: residues 192–212 (PGGG…GYGG), 362–387 (VVGG…GYGD), and 397–411 (GYGG…RQGQ). The segment at 341-390 (GYGYGGYSGSDSGYGNQAAYGVVGGRPSGGGSNNPGSGGYMGGGYGDGSW) is nuclear targeting sequence (M9).

Component of the spliceosome. Interacts with TRN1.

The protein resides in the nucleus. It localises to the cytoplasm. Involved with pre-mRNA processing. Forms complexes (ribonucleosomes) with at least 20 other different hnRNP and heterogeneous nuclear RNA in the nucleus. In terms of biological role, involved in the packaging of pre-mRNA into hnRNP particles, transport of poly(A) mRNA from the nucleus to the cytoplasm and may modulate splice site selection. This Arabidopsis thaliana (Mouse-ear cress) protein is Heterogeneous nuclear ribonucleoprotein 1 (RNP1).